A 371-amino-acid chain; its full sequence is Cytochrome b (371 aa).

4 consecutive transmembrane segments (helical) span residues 25–45 (FGSM…FLAV), 69–90 (WMMQ…YIHI), 105–125 (WLSG…GYVL), and 170–190 (FFAL…LHIM). The heme b site is built by histidine 75 and histidine 89. The heme b site is built by histidine 174 and histidine 188. Histidine 193 contacts a ubiquinone. 4 consecutive transmembrane segments (helical) span residues 218–238 (YKDL…VSFL), 280–300 (LGGA…PFTH), 312–332 (IMQL…WAAT), and 339–358 (FTMI…IMNP).

It belongs to the cytochrome b family. As to quaternary structure, the cytochrome bc1 complex contains 3 respiratory subunits (MT-CYB, CYC1 and UQCRFS1), 2 core proteins (UQCRC1 and UQCRC2) and probably 6 low-molecular weight proteins. Requires heme b as cofactor.

The protein resides in the mitochondrion inner membrane. Component of the ubiquinol-cytochrome c reductase complex (complex III or cytochrome b-c1 complex) that is part of the mitochondrial respiratory chain. The b-c1 complex mediates electron transfer from ubiquinol to cytochrome c. Contributes to the generation of a proton gradient across the mitochondrial membrane that is then used for ATP synthesis. The protein is Cytochrome b (MT-CYB) of Eryx miliaris (Desert sand boa).